The sequence spans 336 residues: Dihydroorotate dehydrogenase (quinone) (336 aa).

Residues 62-66 (AGLDK) and Thr-86 each bind FMN. Lys-66 provides a ligand contact to substrate. 111-115 (NRMGF) is a binding site for substrate. Positions 139 and 172 each coordinate FMN. Asn-172 is a binding site for substrate. The active-site Nucleophile is Ser-175. Residue Asn-177 coordinates substrate. Residues Lys-217 and Thr-245 each contribute to the FMN site. 246–247 (NT) is a binding site for substrate. FMN-binding positions include Gly-268, Gly-297, and 318-319 (YS).

The protein belongs to the dihydroorotate dehydrogenase family. Type 2 subfamily. Monomer. FMN serves as cofactor.

It localises to the cell membrane. It carries out the reaction (S)-dihydroorotate + a quinone = orotate + a quinol. It functions in the pathway pyrimidine metabolism; UMP biosynthesis via de novo pathway; orotate from (S)-dihydroorotate (quinone route): step 1/1. In terms of biological role, catalyzes the conversion of dihydroorotate to orotate with quinone as electron acceptor. In Klebsiella pneumoniae (strain 342), this protein is Dihydroorotate dehydrogenase (quinone).